Here is a 308-residue protein sequence, read N- to C-terminus: Putative transposon Ty5-1 protein YCL074W (308 aa).

This chain is Putative transposon Ty5-1 protein YCL074W (TY5A), found in Saccharomyces cerevisiae (strain ATCC 204508 / S288c) (Baker's yeast).